A 226-amino-acid chain; its full sequence is Ribonuclease 3 (226 aa).

One can recognise an RNase III domain in the interval 6-128; it reads VNQLQKKLGY…LIGAIFLDSD (123 aa). Mg(2+) is bound at residue glutamate 41. Aspartate 45 is an active-site residue. Mg(2+) is bound by residues aspartate 114 and glutamate 117. Glutamate 117 is a catalytic residue. The 71-residue stretch at 155–225 folds into the DRBM domain; sequence DPKTRLQEYL…AEQALIQLEL (71 aa).

The protein belongs to the ribonuclease III family. As to quaternary structure, homodimer. Mg(2+) is required as a cofactor.

The protein localises to the cytoplasm. The catalysed reaction is Endonucleolytic cleavage to 5'-phosphomonoester.. Digests double-stranded RNA. Involved in the processing of primary rRNA transcript to yield the immediate precursors to the large and small rRNAs (23S and 16S). Processes some mRNAs, and tRNAs when they are encoded in the rRNA operon. Processes pre-crRNA and tracrRNA of type II CRISPR loci if present in the organism. This chain is Ribonuclease 3, found in Proteus mirabilis (strain HI4320).